We begin with the raw amino-acid sequence, 430 residues long: Enolase (430 aa).

Glutamine 167 provides a ligand contact to (2R)-2-phosphoglycerate. Catalysis depends on glutamate 209, which acts as the Proton donor. The Mg(2+) site is built by aspartate 246, glutamate 289, and aspartate 316. Positions 341, 370, 371, and 392 each coordinate (2R)-2-phosphoglycerate. Lysine 341 acts as the Proton acceptor in catalysis.

This sequence belongs to the enolase family. In terms of assembly, component of the RNA degradosome, a multiprotein complex involved in RNA processing and mRNA degradation. Requires Mg(2+) as cofactor.

Its subcellular location is the cytoplasm. It localises to the secreted. It is found in the cell surface. The catalysed reaction is (2R)-2-phosphoglycerate = phosphoenolpyruvate + H2O. It functions in the pathway carbohydrate degradation; glycolysis; pyruvate from D-glyceraldehyde 3-phosphate: step 4/5. Catalyzes the reversible conversion of 2-phosphoglycerate (2-PG) into phosphoenolpyruvate (PEP). It is essential for the degradation of carbohydrates via glycolysis. The protein is Enolase of Idiomarina loihiensis (strain ATCC BAA-735 / DSM 15497 / L2-TR).